The sequence spans 600 residues: NADH-quinone oxidoreductase subunit C/D (600 aa).

Positions 1-190 are NADH dehydrogenase I subunit C; the sequence is MVNNMTDLTA…SPFELTKAKQ (190 aa). Residues 214-600 are NADH dehydrogenase I subunit D; that stretch reads DFMFLNLGPN…IDFVMSDVDR (387 aa).

The protein in the N-terminal section; belongs to the complex I 30 kDa subunit family. It in the C-terminal section; belongs to the complex I 49 kDa subunit family. In terms of assembly, NDH-1 is composed of 13 different subunits. Subunits NuoB, CD, E, F, and G constitute the peripheral sector of the complex.

It is found in the cell inner membrane. It catalyses the reaction a quinone + NADH + 5 H(+)(in) = a quinol + NAD(+) + 4 H(+)(out). In terms of biological role, NDH-1 shuttles electrons from NADH, via FMN and iron-sulfur (Fe-S) centers, to quinones in the respiratory chain. The immediate electron acceptor for the enzyme in this species is believed to be ubiquinone. Couples the redox reaction to proton translocation (for every two electrons transferred, four hydrogen ions are translocated across the cytoplasmic membrane), and thus conserves the redox energy in a proton gradient. This Escherichia coli (strain K12 / DH10B) protein is NADH-quinone oxidoreductase subunit C/D.